The primary structure comprises 321 residues: Arabinan endo-1,5-alpha-L-arabinosidase A (321 aa).

Residues Met-1–Gly-19 form the signal peptide. Asp-34 serves as the catalytic Proton acceptor. The N-linked (GlcNAc...) asparagine glycan is linked to Asn-192. The active-site Proton donor is Glu-200.

It belongs to the glycosyl hydrolase 43 family.

It is found in the secreted. The enzyme catalyses Endohydrolysis of (1-&gt;5)-alpha-arabinofuranosidic linkages in (1-&gt;5)-arabinans.. It participates in glycan metabolism; L-arabinan degradation. In terms of biological role, endo-1,5-alpha-L-arabinanase involved in degradation of pectin. Its preferred substrate is linear 1,5-alpha-L-arabinan. The chain is Arabinan endo-1,5-alpha-L-arabinosidase A (abnA) from Aspergillus aculeatus.